Reading from the N-terminus, the 70-residue chain is Small ribosomal subunit protein bS21 (70 aa).

The protein belongs to the bacterial ribosomal protein bS21 family.

The polypeptide is Small ribosomal subunit protein bS21 (Sulfurovum sp. (strain NBC37-1)).